The following is a 116-amino-acid chain: Ribosome-binding factor A (116 aa).

The protein belongs to the RbfA family. As to quaternary structure, monomer. Binds 30S ribosomal subunits, but not 50S ribosomal subunits or 70S ribosomes.

It localises to the cytoplasm. One of several proteins that assist in the late maturation steps of the functional core of the 30S ribosomal subunit. Associates with free 30S ribosomal subunits (but not with 30S subunits that are part of 70S ribosomes or polysomes). Required for efficient processing of 16S rRNA. May interact with the 5'-terminal helix region of 16S rRNA. The sequence is that of Ribosome-binding factor A from Chlorobium phaeobacteroides (strain BS1).